The primary structure comprises 549 residues: Undecaprenyl phosphate-alpha-4-amino-4-deoxy-L-arabinose arabinosyl transferase (549 aa).

Helical transmembrane passes span 9-29 (LLLI…GLWI), 80-100 (LFGV…LAYL), 112-132 (SLAC…SGYA), 133-153 (NLDP…WHAL), 176-196 (FLTK…PYML), 204-224 (LLGY…PWAL), 256-276 (PWWF…GLLP), 288-308 (QAPV…FSLS), 312-332 (LPTY…HALV), 346-366 (NGLL…YLQL), 376-396 (FELF…LAQW), and 402-422 (AWAA…AAMP).

The protein belongs to the glycosyltransferase 83 family.

The protein localises to the cell inner membrane. The enzyme catalyses 4-amino-4-deoxy-alpha-L-arabinopyranosyl di-trans,octa-cis-undecaprenyl phosphate + lipid IVA = lipid IIA + di-trans,octa-cis-undecaprenyl phosphate.. It functions in the pathway lipopolysaccharide metabolism; 4-amino-4-deoxy-beta-L-arabinose-lipid A biosynthesis. Catalyzes the transfer of the L-Ara4N moiety of the glycolipid undecaprenyl phosphate-alpha-L-Ara4N to lipid A. The modified arabinose is attached to lipid A and is required for resistance to polymyxin and cationic antimicrobial peptides. This is Undecaprenyl phosphate-alpha-4-amino-4-deoxy-L-arabinose arabinosyl transferase from Pseudomonas aeruginosa (strain LESB58).